A 290-amino-acid polypeptide reads, in one-letter code: Manganese efflux system protein MneS (290 aa).

6 consecutive transmembrane segments (helical) span residues 15–35 (LVSI…GYLF), 39–61 (ALTA…LIGL), 82–102 (IASL…LFSA), 113–133 (TPDM…LIVY), 159–179 (AFVS…LAWI), and 181–201 (TVTA…IFKE).

The protein belongs to the cation diffusion facilitator (CDF) transporter (TC 2.A.4) family.

The protein localises to the cell membrane. Its function is as follows. Secondary manganese efflux system. May prevent manganese intoxication. The polypeptide is Manganese efflux system protein MneS (Bacillus subtilis (strain 168)).